The primary structure comprises 128 residues: Fluoride-specific ion channel FluC (128 aa).

The next 4 helical transmembrane spans lie at 7-29 (LNFIAIGIGATLGAWLRWVLGLR), 36-57 (PWGTLTANLVGGYLIGVMVALI), 65-94 (AWIRLAAVTGFLGGLTTFSTFSAETVDMLE), and 98-126 (YATAAAYAGASLAGSLAMTGLGLATVRLL). Residue Asn43 participates in fluoride binding. Residues Gly77 and Thr80 each coordinate Na(+). 3 residues coordinate fluoride: Tyr104, Ser108, and Ser112.

Belongs to the fluoride channel Fluc/FEX (TC 1.A.43) family. In terms of assembly, homodimer.

It is found in the cell inner membrane. It carries out the reaction fluoride(in) = fluoride(out). Its activity is regulated as follows. Na(+) is not transported, but it plays an essential structural role and its presence is essential for fluoride channel function. The Na(+)-binding site is specific for Na(+) over most other cations including K(+) and Mg(2+). Fluoride efflux is inhibited by Li(2+). In terms of biological role, fluoride-specific ion channel. Important for reducing fluoride concentration in the cell, thus reducing its toxicity. Is highly specific for fluoride ions and cannot transport chloride ions. This Bordetella pertussis (strain Tohama I / ATCC BAA-589 / NCTC 13251) protein is Fluoride-specific ion channel FluC.